A 2104-amino-acid chain; its full sequence is Phenolphthiocerol synthesis polyketide synthase type I Pks15/1 (2104 aa).

One can recognise a Ketosynthase family 3 (KS3) domain in the interval 41–464; it reads TEPVAVVGIG…GTNAHVILEE (424 aa). Active-site for beta-ketoacyl synthase activity residues include Cys-211, His-346, and His-386. The segment at 571–887 is acyltransferase; it reads TAVVFPGQGS…GQLFSTGMSV (317 aa). Ser-662 acts as the For acyltransferase activity in catalysis. Residues 935–1057 are N-terminal hotdog fold; the sequence is HALLGAVVER…GMLGVEAASS (123 aa). Positions 935 to 1095 are dehydratase; that stretch reads HALLGAVVER…YAYGPGFQGL (161 aa). Residues 935–1207 enclose the PKS/mFAS DH domain; sequence HALLGAVVER…TRAMSAAQLR (273 aa). His-967 functions as the Proton acceptor; for dehydratase activity in the catalytic mechanism. The C-terminal hotdog fold stretch occupies residues 1069 to 1207; that stretch reads AESVDISDGY…TRAMSAAQLR (139 aa). Asp-1128 acts as the Proton donor; for dehydratase activity in catalysis. Residues 1400–1705 are enoylreductase; that stretch reads GTLEDLVIEP…QARHIGKVVL (306 aa). NADP(+) contacts are provided by residues 1530–1547 and 1719–1734; these read VLIH…VQLA and TVLI…AVLA. Residues 1718–1899 form a beta-ketoacyl reductase (KR) region; the sequence is ATVLITGATG…SVAWGLWEQS (182 aa). One can recognise a Carrier domain in the interval 2004 to 2079; that stretch reads DALVGLVCLQ…AIAEYVGRQI (76 aa). Position 2039 is an O-(pantetheine 4'-phosphoryl)serine (Ser-2039). Residues 2081–2104 form a disordered region; sequence DSQATQAEEEKLPESDGEMVSVTA.

This sequence belongs to the thiolase-like superfamily. Beta-ketoacyl-ACP synthases family. Pantetheine 4'-phosphate is required as a cofactor.

The catalysed reaction is a fatty acyl-[ACP] + malonyl-[ACP] + H(+) = a 3-oxoacyl-[ACP] + holo-[ACP] + CO2. The protein operates within lipid metabolism; fatty acid biosynthesis. Functionally, catalyzes the elongation by iterative transfer of p-hydroxybenzoyl group from FadD22 (pHBA-S-FAdD22) to form p-hydroxyphenylalkanoate (pHPA) intermediates during phenolphthiocerol (PPOL) biosynthesis. PPOL is an important intermediate in the biosynthesis of phenolic glycolipid (mycosid B). In Mycobacterium marinum (strain ATCC BAA-535 / M), this protein is Phenolphthiocerol synthesis polyketide synthase type I Pks15/1 (pks15/1).